Here is a 223-residue protein sequence, read N- to C-terminus: MLDKVKGRLIVSCQALENEPLHSPFIMGRMAKAAMEGGAVGIRAQGVEDIIEIKKVTGLPVIGIIKRNYEDSDIYITPTKKEVDELLTTGCEMIALDATNRVRPNNEDLKELIKYIKENGVLVMADISNYDEAIKAQEYGVDCVSTTLSGYTPYTKTLEGPDFVLMERLVKDLEIPVIAEGKVNTPQDLKKVFELGVHSSVVGSAITRPQLITEKFVKAIEIN.

The protein belongs to the NanE family.

The catalysed reaction is an N-acyl-D-glucosamine 6-phosphate = an N-acyl-D-mannosamine 6-phosphate. It participates in amino-sugar metabolism; N-acetylneuraminate degradation; D-fructose 6-phosphate from N-acetylneuraminate: step 3/5. Functionally, converts N-acetylmannosamine-6-phosphate (ManNAc-6-P) to N-acetylglucosamine-6-phosphate (GlcNAc-6-P). The chain is Putative N-acetylmannosamine-6-phosphate 2-epimerase from Clostridioides difficile (strain 630) (Peptoclostridium difficile).